A 103-amino-acid chain; its full sequence is MYAVIKTGGKQYRVASGEKIKVEQIAADVGQEIVIDQVLAVGNGAELKVGTPLVSGATVTATVVAHGKHDKVRIFKMRRRKHYQKRQGHRQQFTELQIGAIAA.

Belongs to the bacterial ribosomal protein bL21 family. As to quaternary structure, part of the 50S ribosomal subunit. Contacts protein L20.

Its function is as follows. This protein binds to 23S rRNA in the presence of protein L20. This is Large ribosomal subunit protein bL21 from Paracidovorax citrulli (strain AAC00-1) (Acidovorax citrulli).